Here is a 245-residue protein sequence, read N- to C-terminus: Uridylate kinase (245 aa).

ATP is bound at residue 12-15; the sequence is KLSG. Residues 20 to 25 are involved in allosteric activation by GTP; the sequence is GEKGVG. Gly54 serves as a coordination point for UMP. Residues Gly55 and Arg59 each coordinate ATP. Residues Asp74 and 135-142 contribute to the UMP site; that span reads IGSPYFST. Residues Asn163, Tyr169, and Asp172 each contribute to the ATP site.

Belongs to the UMP kinase family. Homohexamer.

The protein resides in the cytoplasm. It catalyses the reaction UMP + ATP = UDP + ADP. Its pathway is pyrimidine metabolism; CTP biosynthesis via de novo pathway; UDP from UMP (UMPK route): step 1/1. Allosterically activated by GTP. Inhibited by UTP. In terms of biological role, catalyzes the reversible phosphorylation of UMP to UDP. In Streptococcus thermophilus (strain ATCC BAA-491 / LMD-9), this protein is Uridylate kinase.